A 265-amino-acid chain; its full sequence is Small ribosomal subunit protein eS1 (265 aa).

Disordered stretches follow at residues 1–24 (MTQG…RTID) and 240–265 (HEKK…LLAQ). Basic and acidic residues predominate over residues 240–253 (HEKKGEKATGRDGA).

It belongs to the eukaryotic ribosomal protein eS1 family. Component of the small ribosomal subunit. Mature ribosomes consist of a small (40S) and a large (60S) subunit. The 40S subunit contains about 33 different proteins and 1 molecule of RNA (18S). The 60S subunit contains about 49 different proteins and 3 molecules of RNA (25S, 5.8S and 5S).

It localises to the cytoplasm. This Tetrahymena thermophila (strain SB210) protein is Small ribosomal subunit protein eS1.